A 429-amino-acid polypeptide reads, in one-letter code: MLIVKRTSEVKGIINAPPSKSYTHRAVISASLANGLSILKNPLNGADCLSSAHACRMLGAEITNEVEKWTIIGSKLKVPDNIIDIGNSGTTLRIITGISSQIPDGYAVITGDDSIRKRPMQPLLDALKQLGIESFSTRNNGIAPIIVKAGKITSNSVKIRGDMSSQFITSLMMTLPFSETDSEIILTTPLKSEPYLNITIDVLDKFGVKIEKIVEENKTGYKIKGKQSYRPCEYTIEGDYSSASYLIATGVLLNSDIEVKNVFKNSKQGDREIIEIVKKMGADVEINENNVKIKGPYNLKGIEIDVTNIPDLVPTIAVLGCFAEGKTVVYNGEHVRLKECDRLNACAVELSKMGADIEEKPDGLIITGTHKLTGSKLKTHDDHRLVMAFTIAGMLADGETVIEGEESVKISFPDFVDKMKSIGCNIEVI.

3-phosphoshikimate-binding residues include Lys20, Ser21, and Arg25. Phosphoenolpyruvate is bound at residue Lys20. The phosphoenolpyruvate site is built by Gly89 and Arg118. The 3-phosphoshikimate site is built by Ser164, Ser165, Gln166, Ser192, Asp311, and Lys338. A phosphoenolpyruvate-binding site is contributed by Gln166. Asp311 (proton acceptor) is an active-site residue. Residues Arg342 and Arg384 each coordinate phosphoenolpyruvate.

This sequence belongs to the EPSP synthase family. Monomer.

Its subcellular location is the cytoplasm. It catalyses the reaction 3-phosphoshikimate + phosphoenolpyruvate = 5-O-(1-carboxyvinyl)-3-phosphoshikimate + phosphate. It participates in metabolic intermediate biosynthesis; chorismate biosynthesis. Its function is as follows. Catalyzes the transfer of the enolpyruvyl moiety of phosphoenolpyruvate (PEP) to the 5-hydroxyl of shikimate-3-phosphate (S3P) to produce enolpyruvyl shikimate-3-phosphate and inorganic phosphate. This is 3-phosphoshikimate 1-carboxyvinyltransferase from Methanococcus vannielii (strain ATCC 35089 / DSM 1224 / JCM 13029 / OCM 148 / SB).